The sequence spans 316 residues: tRNA(Ile)-lysidine synthase (316 aa).

33-38 (SGGTDS) provides a ligand contact to ATP.

Belongs to the tRNA(Ile)-lysidine synthase family.

It localises to the cytoplasm. It carries out the reaction cytidine(34) in tRNA(Ile2) + L-lysine + ATP = lysidine(34) in tRNA(Ile2) + AMP + diphosphate + H(+). Its function is as follows. Ligates lysine onto the cytidine present at position 34 of the AUA codon-specific tRNA(Ile) that contains the anticodon CAU, in an ATP-dependent manner. Cytidine is converted to lysidine, thus changing the amino acid specificity of the tRNA from methionine to isoleucine. This is tRNA(Ile)-lysidine synthase from Bdellovibrio bacteriovorus (strain ATCC 15356 / DSM 50701 / NCIMB 9529 / HD100).